A 247-amino-acid chain; its full sequence is 5'-nucleotidase SurE (247 aa).

Residues Asp-8, Asp-9, Ser-39, and Asn-91 each coordinate a divalent metal cation.

The protein belongs to the SurE nucleotidase family. The cofactor is a divalent metal cation.

The protein resides in the cytoplasm. The enzyme catalyses a ribonucleoside 5'-phosphate + H2O = a ribonucleoside + phosphate. Functionally, nucleotidase that shows phosphatase activity on nucleoside 5'-monophosphates. This chain is 5'-nucleotidase SurE, found in Laribacter hongkongensis (strain HLHK9).